The following is an 85-amino-acid chain: Small integral membrane protein 2 (85 aa).

A helical membrane pass occupies residues 21-43 (GHAISILFGFWTSFICDTYIVLA). Residues 51-85 (SPDVSASSDEPYARIQQSRRQCHAEEDQSQVPEAG) are disordered.

The protein localises to the membrane. The polypeptide is Small integral membrane protein 2 (SMIM2) (Homo sapiens (Human)).